Consider the following 136-residue polypeptide: Ribonuclease P protein component (136 aa).

The protein belongs to the RnpA family. As to quaternary structure, consists of a catalytic RNA component (M1 or rnpB) and a protein subunit.

The catalysed reaction is Endonucleolytic cleavage of RNA, removing 5'-extranucleotides from tRNA precursor.. Functionally, RNaseP catalyzes the removal of the 5'-leader sequence from pre-tRNA to produce the mature 5'-terminus. It can also cleave other RNA substrates such as 4.5S RNA. The protein component plays an auxiliary but essential role in vivo by binding to the 5'-leader sequence and broadening the substrate specificity of the ribozyme. This Burkholderia pseudomallei (strain 1106a) protein is Ribonuclease P protein component.